We begin with the raw amino-acid sequence, 329 residues long: 2-oxoglutarate-dependent dioxygenase mpl2 (329 aa).

Positions 183-288 constitute a Fe2OG dioxygenase domain; that stretch reads PACPLRLLHY…RYSVVFFFDG (106 aa). Fe cation is bound by residues His-211, Asp-213, and His-269. Arg-279 serves as a coordination point for 2-oxoglutarate.

It belongs to the iron/ascorbate-dependent oxidoreductase family. It depends on Fe(2+) as a cofactor.

It functions in the pathway mycotoxin biosynthesis. In terms of biological role, 2-oxoglutarate-dependent dioxygenase; part of the gene cluster that mediates the biosynthesis of the mycotoxin citrinin, a hepato-nephrotoxic compound to humans due to inhibition of respiration complex III. The pathway begins with the synthesis of a keto-aldehyde intermediate by the citrinin PKS (pksCT) from successive condensations of 4 malonyl-CoA units, presumably with a simple acetyl-CoA starter unit. Release of the keto-aldehyde intermediate is consistent with the presence of the C-terminal reductive release domain. Mp11 collaborates with pksCT by catalyzing the hydrolysis of ACP-bound acyl intermediates to free the ACP from stalled intermediates. Mpl2 then catalyzes the oxidation of the C-12 methyl of the ketone intermediate to an alcohol intermediate which is further oxidized by the oxidoreductase mpl7 to produce a bisaldehyde intermediate. The fourth catalytic step is catalyzed by the mpl4 aldehyde dehydrogenase. The final transformation is the reduction of C-3 by mpl6 to provide the chemically stable citrinin nucleus. The polypeptide is 2-oxoglutarate-dependent dioxygenase mpl2 (Monascus purpureus (Red mold)).